Here is a 302-residue protein sequence, read N- to C-terminus: Sulfate adenylyltransferase subunit 2 (302 aa).

The protein belongs to the PAPS reductase family. CysD subfamily. In terms of assembly, heterodimer composed of CysD, the smaller subunit, and CysN.

The enzyme catalyses sulfate + ATP + H(+) = adenosine 5'-phosphosulfate + diphosphate. Its pathway is sulfur metabolism; hydrogen sulfide biosynthesis; sulfite from sulfate: step 1/3. In terms of biological role, with CysN forms the ATP sulfurylase (ATPS) that catalyzes the adenylation of sulfate producing adenosine 5'-phosphosulfate (APS) and diphosphate, the first enzymatic step in sulfur assimilation pathway. APS synthesis involves the formation of a high-energy phosphoric-sulfuric acid anhydride bond driven by GTP hydrolysis by CysN coupled to ATP hydrolysis by CysD. This chain is Sulfate adenylyltransferase subunit 2, found in Escherichia coli O1:K1 / APEC.